We begin with the raw amino-acid sequence, 291 residues long: Homoserine kinase (291 aa).

An ATP-binding site is contributed by 80 to 90 (PLARGLGSSST).

It belongs to the GHMP kinase family. Homoserine kinase subfamily.

It localises to the cytoplasm. It catalyses the reaction L-homoserine + ATP = O-phospho-L-homoserine + ADP + H(+). It functions in the pathway amino-acid biosynthesis; L-threonine biosynthesis; L-threonine from L-aspartate: step 4/5. In terms of biological role, catalyzes the ATP-dependent phosphorylation of L-homoserine to L-homoserine phosphate. The chain is Homoserine kinase from Lactiplantibacillus plantarum (strain ATCC BAA-793 / NCIMB 8826 / WCFS1) (Lactobacillus plantarum).